The chain runs to 445 residues: Putrescine hydroxycinnamoyltransferase 1 (445 aa).

Catalysis depends on proton acceptor residues His-154 and Asp-388.

It belongs to the plant acyltransferase family. In terms of tissue distribution, expressed in leaves.

Functionally, hydroxycinnamoyl transferase that catalyzes the transfer of an acyl from p-coumaryol-CoA to putrescine, to produce coumaroyl putrescine. This chain is Putrescine hydroxycinnamoyltransferase 1, found in Oryza sativa subsp. japonica (Rice).